The chain runs to 380 residues: Cytochrome b (380 aa).

The next 4 helical transmembrane spans lie at Phe34–Met54, Trp78–Ile99, Trp114–Leu134, and Phe179–Thr199. Heme b-binding residues include His84 and His98. Heme b-binding residues include His183 and His197. Position 202 (His202) interacts with a ubiquinone. 4 consecutive transmembrane segments (helical) span residues Ile227 to Ser247, Leu289 to His309, Leu321 to Ser341, and Phe348 to Pro368.

This sequence belongs to the cytochrome b family. The cytochrome bc1 complex contains 11 subunits: 3 respiratory subunits (MT-CYB, CYC1 and UQCRFS1), 2 core proteins (UQCRC1 and UQCRC2) and 6 low-molecular weight proteins (UQCRH/QCR6, UQCRB/QCR7, UQCRQ/QCR8, UQCR10/QCR9, UQCR11/QCR10 and a cleavage product of UQCRFS1). This cytochrome bc1 complex then forms a dimer. Heme b serves as cofactor.

The protein resides in the mitochondrion inner membrane. Functionally, component of the ubiquinol-cytochrome c reductase complex (complex III or cytochrome b-c1 complex) that is part of the mitochondrial respiratory chain. The b-c1 complex mediates electron transfer from ubiquinol to cytochrome c. Contributes to the generation of a proton gradient across the mitochondrial membrane that is then used for ATP synthesis. This Vireo olivaceus (Red-eyed vireo) protein is Cytochrome b (MT-CYB).